The primary structure comprises 845 residues: BLOC-2 complex member HPS5 homolog (845 aa).

Positions 239-268 (PTEEDLEDAKSMEGSDDNDNDQRSSPSGVK) are disordered.

This sequence belongs to the HPS5 family.

Has a role in the biogenesis of eye pigment granules. Eye pigment granules are specialized forms of late endosomes or lysosomes. Biogenesis of pigment granules in the eye requires molecular components required for protein delivery to lysosomes. The polypeptide is BLOC-2 complex member HPS5 homolog (Aedes aegypti (Yellowfever mosquito)).